A 207-amino-acid polypeptide reads, in one-letter code: Large ribosomal subunit protein bL25 (207 aa).

The interval 171-207 (EEETVVTVSAPRAEEEPTTTEAPEPEAVHGKDEEPVE) is disordered. The segment covering 196–207 (EAVHGKDEEPVE) has biased composition (basic and acidic residues).

Belongs to the bacterial ribosomal protein bL25 family. CTC subfamily. As to quaternary structure, part of the 50S ribosomal subunit; part of the 5S rRNA/L5/L18/L25 subcomplex. Contacts the 5S rRNA. Binds to the 5S rRNA independently of L5 and L18.

This is one of the proteins that binds to the 5S RNA in the ribosome where it forms part of the central protuberance. The chain is Large ribosomal subunit protein bL25 from Listeria monocytogenes serotype 4b (strain F2365).